The primary structure comprises 90 residues: NAD(P)H-quinone oxidoreductase subunit H, chloroplastic (90 aa).

Belongs to the complex I 49 kDa subunit family. In terms of assembly, NDH is composed of at least 16 different subunits, 5 of which are encoded in the nucleus.

It is found in the plastid. Its subcellular location is the chloroplast thylakoid membrane. The enzyme catalyses a plastoquinone + NADH + (n+1) H(+)(in) = a plastoquinol + NAD(+) + n H(+)(out). The catalysed reaction is a plastoquinone + NADPH + (n+1) H(+)(in) = a plastoquinol + NADP(+) + n H(+)(out). Its function is as follows. NDH shuttles electrons from NAD(P)H:plastoquinone, via FMN and iron-sulfur (Fe-S) centers, to quinones in the photosynthetic chain and possibly in a chloroplast respiratory chain. The immediate electron acceptor for the enzyme in this species is believed to be plastoquinone. Couples the redox reaction to proton translocation, and thus conserves the redox energy in a proton gradient. This is NAD(P)H-quinone oxidoreductase subunit H, chloroplastic (ndhH) from Secale cereale (Rye).